The sequence spans 251 residues: Hydroxyacylglutathione hydrolase (251 aa).

Zn(2+) is bound by residues His-59, His-61, Asp-63, His-64, His-118, Asp-141, and His-179.

The protein belongs to the metallo-beta-lactamase superfamily. Glyoxalase II family. Monomer. The cofactor is Zn(2+).

The enzyme catalyses an S-(2-hydroxyacyl)glutathione + H2O = a 2-hydroxy carboxylate + glutathione + H(+). It functions in the pathway secondary metabolite metabolism; methylglyoxal degradation; (R)-lactate from methylglyoxal: step 2/2. Thiolesterase that catalyzes the hydrolysis of S-D-lactoyl-glutathione to form glutathione and D-lactic acid. This chain is Hydroxyacylglutathione hydrolase, found in Prochlorococcus marinus (strain NATL2A).